The chain runs to 92 residues: Small ribosomal subunit protein uS19 (92 aa).

Belongs to the universal ribosomal protein uS19 family.

Protein S19 forms a complex with S13 that binds strongly to the 16S ribosomal RNA. This is Small ribosomal subunit protein uS19 from Corynebacterium jeikeium (strain K411).